We begin with the raw amino-acid sequence, 955 residues long: 26S proteasome non-ATPase regulatory subunit 1 (955 aa).

The disordered stretch occupies residues 279 to 313 (PGSTNTGTVPGSEKDSDAMEAEEKPGSTCVGKSAE). Positions 290–303 (SEKDSDAMEAEEKP) are enriched in basic and acidic residues. 10 PC repeats span residues 403–436 (TATASLGVIHKGHEKEALQLMATYLPKDTSPGSA), 441–474 (GGLYALGLIHANHGGDIIDYLLNQLKNASNDIVR), 476–510 (GGSLGLGLAAMGTARQDVYDLLKTNLYQDDAVTGE), 511–545 (AAGLALGLVMLGSKNAQAIEDMVGYAQETQHEKIL), 547–580 (GLAVGIALVMYGRMEEADALIESLCRDKDPILRR), 581–616 (SGMYTVAMAYCGSGNNKAIRRLLHVAVSDVNDDVRR), 617–649 (AAVESLGFILFRTPEQCPSVVSLLSESYNPHVR), 651–685 (GAAMALGICCAGTGNKEAINLLEPMTNDPVNYVRQ), 686–726 (GALI…DVMA), and 729–761 (GAILAQGILDAGGHNVIISLQSRTGHTHMPSVV). Disordered stretches follow at residues 839 to 879 (AKKK…NFQL) and 932 to 955 (AHGPKIEEEEQEPEPPEPFEYIDD). Composition is skewed to basic and acidic residues over residues 842-854 (KEKEKEKEKKEEE) and 861-874 (TEKKDEKEKKKEPE). Residues 938-955 (EEEEQEPEPPEPFEYIDD) are compositionally biased toward acidic residues.

The protein belongs to the proteasome subunit S1 family. In terms of assembly, component of the 19S proteasome regulatory particle complex. The 26S proteasome consists of a 20S core particle (CP) and two 19S regulatory subunits (RP). The regulatory particle is made of a lid composed of 9 subunits, a base containing 6 ATPases and few additional components including PSMD1. Interacts with ADRM1.

In terms of biological role, component of the 26S proteasome, a multiprotein complex involved in the ATP-dependent degradation of ubiquitinated proteins. This complex plays a key role in the maintenance of protein homeostasis by removing misfolded or damaged proteins, which could impair cellular functions, and by removing proteins whose functions are no longer required. Therefore, the proteasome participates in numerous cellular processes, including cell cycle progression, apoptosis, or DNA damage repair. The sequence is that of 26S proteasome non-ATPase regulatory subunit 1 (PSMD1) from Gallus gallus (Chicken).